Consider the following 265-residue polypeptide: NAD-capped RNA hydrolase NudC (265 aa).

Arg76 is a binding site for substrate. Zn(2+)-binding residues include Cys106, Cys109, Cys124, and Cys127. Tyr132 is a binding site for substrate. In terms of domain architecture, Nudix hydrolase spans Pro133–Ala256. A divalent metal cation contacts are provided by Ala166, Glu182, and Glu186. Residues Gly167–Gly188 carry the Nudix box motif. Position 200-207 (Gln200–Ser207) interacts with substrate. Glu227 lines the a divalent metal cation pocket. Ala249 serves as a coordination point for substrate.

It belongs to the Nudix hydrolase family. NudC subfamily. Homodimer. Requires Mg(2+) as cofactor. Mn(2+) serves as cofactor. Zn(2+) is required as a cofactor.

It catalyses the reaction a 5'-end NAD(+)-phospho-ribonucleoside in mRNA + H2O = a 5'-end phospho-adenosine-phospho-ribonucleoside in mRNA + beta-nicotinamide D-ribonucleotide + 2 H(+). The enzyme catalyses NAD(+) + H2O = beta-nicotinamide D-ribonucleotide + AMP + 2 H(+). It carries out the reaction NADH + H2O = reduced beta-nicotinamide D-ribonucleotide + AMP + 2 H(+). In terms of biological role, mRNA decapping enzyme that specifically removes the nicotinamide adenine dinucleotide (NAD) cap from a subset of mRNAs by hydrolyzing the diphosphate linkage to produce nicotinamide mononucleotide (NMN) and 5' monophosphate mRNA. The NAD-cap is present at the 5'-end of some mRNAs and stabilizes RNA against 5'-processing. Has preference for mRNAs with a 5'-end purine. Catalyzes the hydrolysis of a broad range of dinucleotide pyrophosphates. The chain is NAD-capped RNA hydrolase NudC from Chromobacterium violaceum (strain ATCC 12472 / DSM 30191 / JCM 1249 / CCUG 213 / NBRC 12614 / NCIMB 9131 / NCTC 9757 / MK).